Reading from the N-terminus, the 148-residue chain is WAP four-disulfide core domain protein 12 (148 aa).

An N-terminal signal peptide occupies residues 1–23; the sequence is MRSYSFWFLTAFLVFATLALGEA. The region spanning 27–74 is the WAP domain; sequence GKEKWGNCPAEKGSCIKSGPSQCHADNDCPGDKKCCFLSCSFKCVSPD. Intrachain disulfides connect Cys-34–Cys-62, Cys-41–Cys-66, Cys-49–Cys-61, and Cys-55–Cys-70. Residues 74–148 form a disordered region; it reads DRIRKEGGNE…QEASPQKEWS (75 aa).

It is found in the secreted. In terms of biological role, antibacterial protein. Putative acid-stable proteinase inhibitor. The polypeptide is WAP four-disulfide core domain protein 12 (WFDC12) (Lemur catta (Ring-tailed lemur)).